Reading from the N-terminus, the 97-residue chain is High mobility group protein homolog NHP1 (97 aa).

A disordered region spans residues 1–24; it reads MAGASDRTGVRRPRKAKKDPNAPK. A DNA-binding region (HMG box) is located at residues 23-93; the sequence is PKRALSSYMF…RYEREKAEYA (71 aa).

It is found in the nucleus. This Babesia bovis protein is High mobility group protein homolog NHP1.